A 66-amino-acid chain; its full sequence is Protein translocase subunit SecE (66 aa).

A helical transmembrane segment spans residues 29–49; sequence LVASTLVVVVAVFIFSLTCLV.

Belongs to the SecE/SEC61-gamma family. In terms of assembly, component of the Sec protein translocase complex. Heterotrimer consisting of SecY, SecE and SecG subunits. The heterotrimers can form oligomers, although 1 heterotrimer is thought to be able to translocate proteins. Interacts with the ribosome. Interacts with SecDF, and other proteins may be involved. Interacts with SecA.

It localises to the cell inner membrane. In terms of biological role, essential subunit of the Sec protein translocation channel SecYEG. Clamps together the 2 halves of SecY. May contact the channel plug during translocation. The sequence is that of Protein translocase subunit SecE from Rickettsia rickettsii.